Consider the following 265-residue polypeptide: Undecaprenyl-diphosphatase 1 (265 aa).

7 consecutive transmembrane segments (helical) span residues 4-24 (IIIA…PISS), 42-62 (AKTF…ILYH), 84-104 (FHVF…HDVI), 108-128 (LFQP…MILA), 184-204 (SEFS…LDLL), 217-237 (MFAV…VTFL), and 245-265 (LKPF…FVLL).

It belongs to the UppP family.

It localises to the cell membrane. It carries out the reaction di-trans,octa-cis-undecaprenyl diphosphate + H2O = di-trans,octa-cis-undecaprenyl phosphate + phosphate + H(+). Catalyzes the dephosphorylation of undecaprenyl diphosphate (UPP). Confers resistance to bacitracin. The polypeptide is Undecaprenyl-diphosphatase 1 (Bacillus cereus (strain ZK / E33L)).